Here is a 150-residue protein sequence, read N- to C-terminus: Large-conductance mechanosensitive channel (150 aa).

2 helical membrane-spanning segments follow: residues 14 to 34 (VIDL…VTSF) and 81 to 101 (GVFL…FLVV).

This sequence belongs to the MscL family. As to quaternary structure, homopentamer.

It localises to the cell membrane. Channel that opens in response to stretch forces in the membrane lipid bilayer. May participate in the regulation of osmotic pressure changes within the cell. In Syntrophomonas wolfei subsp. wolfei (strain DSM 2245B / Goettingen), this protein is Large-conductance mechanosensitive channel.